Consider the following 104-residue polypeptide: Urease subunit beta (104 aa).

It belongs to the urease beta subunit family. Heterotrimer of UreA (gamma), UreB (beta) and UreC (alpha) subunits. Three heterotrimers associate to form the active enzyme.

Its subcellular location is the cytoplasm. The catalysed reaction is urea + 2 H2O + H(+) = hydrogencarbonate + 2 NH4(+). Its pathway is nitrogen metabolism; urea degradation; CO(2) and NH(3) from urea (urease route): step 1/1. The chain is Urease subunit beta from Rhodococcus jostii (strain RHA1).